Consider the following 513-residue polypeptide: GMP synthase [glutamine-hydrolyzing] (513 aa).

Residues 7-197 (TILVLDFGGQ…LFGVCGCTGE (191 aa)) enclose the Glutamine amidotransferase type-1 domain. Cysteine 84 (nucleophile) is an active-site residue. Active-site residues include histidine 171 and glutamate 173. The GMPS ATP-PPase domain occupies 198–387 (WTMENFIEEQ…LGLPEDIVWR (190 aa)). 225–231 (SGGVDSS) serves as a coordination point for ATP.

In terms of assembly, homodimer.

It catalyses the reaction XMP + L-glutamine + ATP + H2O = GMP + L-glutamate + AMP + diphosphate + 2 H(+). Its pathway is purine metabolism; GMP biosynthesis; GMP from XMP (L-Gln route): step 1/1. In terms of biological role, catalyzes the synthesis of GMP from XMP. This is GMP synthase [glutamine-hydrolyzing] from Heliobacterium modesticaldum (strain ATCC 51547 / Ice1).